The following is a 122-amino-acid chain: Large ribosomal subunit protein bL12 (122 aa).

It belongs to the bacterial ribosomal protein bL12 family. In terms of assembly, homodimer. Part of the ribosomal stalk of the 50S ribosomal subunit. Forms a multimeric L10(L12)X complex, where L10 forms an elongated spine to which 2 to 4 L12 dimers bind in a sequential fashion. Binds GTP-bound translation factors.

Its function is as follows. Forms part of the ribosomal stalk which helps the ribosome interact with GTP-bound translation factors. Is thus essential for accurate translation. The sequence is that of Large ribosomal subunit protein bL12 from Streptococcus pneumoniae serotype 19F (strain G54).